The sequence spans 387 residues: Succinate--CoA ligase [ADP-forming] subunit beta (387 aa).

Residues 9–236 (RDLFESYGVP…AAAADPLEAK (228 aa)) enclose the ATP-grasp domain. ATP-binding positions include K45, 52–54 (GRG), A94, and E99. Mg(2+) contacts are provided by N191 and D205. Residues N256 and 318-320 (GIT) each bind substrate.

Belongs to the succinate/malate CoA ligase beta subunit family. Heterotetramer of two alpha and two beta subunits. The cofactor is Mg(2+).

It carries out the reaction succinate + ATP + CoA = succinyl-CoA + ADP + phosphate. It catalyses the reaction GTP + succinate + CoA = succinyl-CoA + GDP + phosphate. The protein operates within carbohydrate metabolism; tricarboxylic acid cycle; succinate from succinyl-CoA (ligase route): step 1/1. In terms of biological role, succinyl-CoA synthetase functions in the citric acid cycle (TCA), coupling the hydrolysis of succinyl-CoA to the synthesis of either ATP or GTP and thus represents the only step of substrate-level phosphorylation in the TCA. The beta subunit provides nucleotide specificity of the enzyme and binds the substrate succinate, while the binding sites for coenzyme A and phosphate are found in the alpha subunit. The sequence is that of Succinate--CoA ligase [ADP-forming] subunit beta from Clavibacter michiganensis subsp. michiganensis (strain NCPPB 382).